The primary structure comprises 277 residues: S-formylglutathione hydrolase FrmB (277 aa).

Active-site charge relay system residues include serine 145, aspartate 221, and histidine 254.

The protein belongs to the esterase D family.

It carries out the reaction S-formylglutathione + H2O = formate + glutathione + H(+). Functionally, serine hydrolase involved in the detoxification of formaldehyde. Hydrolyzes S-formylglutathione to glutathione and formate. This chain is S-formylglutathione hydrolase FrmB (frmB), found in Escherichia coli O6:K15:H31 (strain 536 / UPEC).